The chain runs to 628 residues: Cytoplasmic dynein 1 intermediate chain 1 (628 aa).

Basic and acidic residues-rich tracts occupy residues 1–13 and 20–60; these read MSDK…ELER and QIRE…RETE. The interval 1–114 is disordered; it reads MSDKSDLKAE…RTLQWDTDPS (114 aa). Residue Ser2 is modified to N-acetylserine. The residue at position 50 (Ser50) is a Phosphoserine. A compositionally biased stretch (pro residues) spans 70 to 79; sequence PEPPLVPTPM. Positions 80–90 are enriched in low complexity; that stretch reads SPSSKSVSTPS. At Ser83 the chain carries Phosphoserine. Thr88 is subject to Phosphothreonine. Phosphoserine occurs at positions 90, 94, and 97. Positions 105–114 are enriched in polar residues; the sequence is RTLQWDTDPS. The segment at 130-146 is interaction with DYNLT1; that stretch reads KLGVSKVTQVDFLPREV. The tract at residues 152-204 is disordered; the sequence is ETQTPLATHQSEEDEEDEEMVEPKIGHDSELENQEKKQETKEAPPRELTEEEK. Position 159 is a phosphothreonine (Thr159). Residues Ser162 and Ser180 each carry the phosphoserine modification. Positions 172-204 are enriched in basic and acidic residues; it reads VEPKIGHDSELENQEKKQETKEAPPRELTEEEK. WD repeat units follow at residues 268–317, 321–361, 370–411, 420–460, 465–510, 513–553, and 559–598; these read SKHR…TTPE, HCQS…RTPV, AHTH…TPQE, SKPV…AGIG, GHQG…PLYS, DNAD…EVPT, and EGAS…VPHN. Ser618 carries the phosphoserine modification.

It belongs to the dynein intermediate chain family. As to quaternary structure, homodimer. The cytoplasmic dynein 1 complex consists of two catalytic heavy chains (HCs) and a number of non-catalytic subunits presented by intermediate chains (ICs), light intermediate chains (LICs) and light chains (LCs); the composition seems to vary in respect to the IC, LIC and LC composition. The heavy chain homodimer serves as a scaffold for the probable homodimeric assembly of the respective non-catalytic subunits. The ICs and LICs bind directly to the HC dimer and the LCs assemble on the IC dimer. Interacts with DYNC1H1. Interacts with DYNLT1 and DYNLT3. Interacts with DCTN1. Interacts with DYNLL2. Interacts with MCRS1; the interaction is required for the proper distribution of centriolar satellites.

It localises to the cytoplasm. It is found in the chromosome. The protein localises to the centromere. Its subcellular location is the kinetochore. The protein resides in the cytoskeleton. It localises to the spindle pole. Acts as one of several non-catalytic accessory components of the cytoplasmic dynein 1 complex that are thought to be involved in linking dynein to cargos and to adapter proteins that regulate dynein function. Cytoplasmic dynein 1 acts as a motor for the intracellular retrograde motility of vesicles and organelles along microtubules. The intermediate chains mediate the binding of dynein to dynactin via its 150 kDa component (p150-glued) DCTN1. May play a role in mediating the interaction of cytoplasmic dynein with membranous organelles and kinetochores. This chain is Cytoplasmic dynein 1 intermediate chain 1 (Dync1i1), found in Mus musculus (Mouse).